Reading from the N-terminus, the 571-residue chain is Proline--tRNA ligase (571 aa).

This sequence belongs to the class-II aminoacyl-tRNA synthetase family. ProS type 1 subfamily. In terms of assembly, homodimer.

It is found in the cytoplasm. The enzyme catalyses tRNA(Pro) + L-proline + ATP = L-prolyl-tRNA(Pro) + AMP + diphosphate. In terms of biological role, catalyzes the attachment of proline to tRNA(Pro) in a two-step reaction: proline is first activated by ATP to form Pro-AMP and then transferred to the acceptor end of tRNA(Pro). As ProRS can inadvertently accommodate and process non-cognate amino acids such as alanine and cysteine, to avoid such errors it has two additional distinct editing activities against alanine. One activity is designated as 'pretransfer' editing and involves the tRNA(Pro)-independent hydrolysis of activated Ala-AMP. The other activity is designated 'posttransfer' editing and involves deacylation of mischarged Ala-tRNA(Pro). The misacylated Cys-tRNA(Pro) is not edited by ProRS. This is Proline--tRNA ligase from Pseudomonas fluorescens (strain Pf0-1).